The chain runs to 149 residues: Cytochrome c-type biogenesis protein CcmE (149 aa).

Topologically, residues 1-7 (MKPRHKK) are cytoplasmic. A helical; Signal-anchor for type II membrane protein transmembrane segment spans residues 8 to 28 (MAVIALSVSALTVAVVLVLNA). Residues 29–149 (FQSNLVFFFS…AKAQKTSLAQ (121 aa)) lie on the Periplasmic side of the membrane. Heme is bound by residues His123 and Tyr127.

It belongs to the CcmE/CycJ family.

The protein localises to the cell inner membrane. Functionally, heme chaperone required for the biogenesis of c-type cytochromes. Transiently binds heme delivered by CcmC and transfers the heme to apo-cytochromes in a process facilitated by CcmF and CcmH. In Nitrosomonas europaea (strain ATCC 19718 / CIP 103999 / KCTC 2705 / NBRC 14298), this protein is Cytochrome c-type biogenesis protein CcmE.